The following is a 346-amino-acid chain: Glycerol-1-phosphate dehydrogenase [NAD(P)+] (346 aa).

NAD(+) contacts are provided by residues 93 to 97 (GTIID) and 115 to 118 (TTAS). Asp-120 contributes to the substrate binding site. Residue Ser-124 participates in NAD(+) binding. A substrate-binding site is contributed by Asp-167. Zn(2+)-binding residues include Asp-167 and His-247. His-251 contacts substrate. A Zn(2+)-binding site is contributed by His-263.

This sequence belongs to the glycerol-1-phosphate dehydrogenase family. Zn(2+) is required as a cofactor.

The protein localises to the cytoplasm. The catalysed reaction is sn-glycerol 1-phosphate + NAD(+) = dihydroxyacetone phosphate + NADH + H(+). It carries out the reaction sn-glycerol 1-phosphate + NADP(+) = dihydroxyacetone phosphate + NADPH + H(+). Its pathway is membrane lipid metabolism; glycerophospholipid metabolism. In terms of biological role, catalyzes the NAD(P)H-dependent reduction of dihydroxyacetonephosphate (DHAP or glycerone phosphate) to glycerol 1-phosphate (G1P). The G1P thus generated is used as the glycerophosphate backbone of phospholipids in the cellular membranes of Archaea. This Pyrococcus furiosus (strain ATCC 43587 / DSM 3638 / JCM 8422 / Vc1) protein is Glycerol-1-phosphate dehydrogenase [NAD(P)+].